Consider the following 505-residue polypeptide: Annexin A11 (505 aa).

Pro residues-rich tracts occupy residues 1–17 (MSYP…PPAA) and 99–160 (PVPP…PVPL). 2 disordered regions span residues 1–38 (MSYP…PPIG) and 84–199 (PVPP…DAPG). Low complexity predominate over residues 161 to 177 (PGQQQPVPSYPGYPGSG). Annexin repeat units lie at residues 200–271 (FDPL…ALMK), 272–343 (TPVL…SLSQ), 355–427 (SLAQ…AVVK), and 431–502 (NTPA…KICG). N6-acetyllysine is present on residues lysine 248 and lysine 255. Lysine 479 carries the N6-acetyllysine modification.

Belongs to the annexin family. In terms of assembly, interacts with S100A6. Interacts with PDCD6 in a calcium-dependent manner. Interacts with KIF23 during cytokinesis.

It is found in the cytoplasm. Its subcellular location is the melanosome. The protein localises to the nucleus envelope. It localises to the nucleus. The protein resides in the nucleoplasm. It is found in the cytoskeleton. Its subcellular location is the spindle. Its function is as follows. Binds specifically to calcyclin in a calcium-dependent manner. Required for midbody formation and completion of the terminal phase of cytokinesis. This Homo sapiens (Human) protein is Annexin A11 (ANXA11).